The primary structure comprises 167 residues: uncharacterized protein (167 aa).

The stretch at 70–118 (KIVELRKAMESIITELAYIKGELKGLQEKGESKVERKEIIEEKIQKAMV) forms a coiled coil. The segment covering 128–155 (EKEERKPAKESKRREHDVIIPEGKKEER) has biased composition (basic and acidic residues). The segment at 128–167 (EKEERKPAKESKRREHDVIIPEGKKEERTDDGEDGLIVCD) is disordered.

This is an uncharacterized protein from Archaeoglobus fulgidus (strain ATCC 49558 / DSM 4304 / JCM 9628 / NBRC 100126 / VC-16).